The following is a 61-amino-acid chain: Large ribosomal subunit protein uL30 (61 aa).

The protein belongs to the universal ribosomal protein uL30 family. As to quaternary structure, part of the 50S ribosomal subunit.

This is Large ribosomal subunit protein uL30 from Bifidobacterium longum (strain DJO10A).